The chain runs to 231 residues: Heptaprenylglyceryl phosphate synthase (231 aa).

Lys-12 serves as a coordination point for sn-glycerol 1-phosphate. Residues Asp-14 and Thr-40 each coordinate Mg(2+). Sn-glycerol 1-phosphate-binding positions include 159-164 (YMEYSG), Gly-189, and 209-210 (GN).

It belongs to the GGGP/HepGP synthase family. Group I subfamily. As to quaternary structure, homodimer. Mg(2+) serves as cofactor.

It carries out the reaction sn-glycerol 1-phosphate + all-trans-heptaprenyl diphosphate = 3-heptaprenyl-sn-glycero-1-phosphate + diphosphate. Its pathway is membrane lipid metabolism; glycerophospholipid metabolism. Its function is as follows. Prenyltransferase that catalyzes in vivo the transfer of the heptaprenyl moiety of heptaprenyl pyrophosphate (HepPP; 35 carbon atoms) to the C3 hydroxyl of sn-glycerol-1-phosphate (G1P), producing heptaprenylglyceryl phosphate (HepGP). This reaction is an ether-bond-formation step in the biosynthesis of archaea-type G1P-based membrane lipids found in Bacillales. This is Heptaprenylglyceryl phosphate synthase from Anoxybacillus flavithermus (strain DSM 21510 / WK1).